The sequence spans 151 residues: Transcriptional regulator MraZ (151 aa).

2 consecutive SpoVT-AbrB domains span residues 5 to 52 and 81 to 124; these read ANAI…PLSE and AVDL…DEDA.

The protein belongs to the MraZ family. Forms oligomers.

The protein resides in the cytoplasm. It localises to the nucleoid. This chain is Transcriptional regulator MraZ, found in Pseudomonas syringae pv. tomato (strain ATCC BAA-871 / DC3000).